The primary structure comprises 842 residues: Oligopeptide transporter phomP2' (842 aa).

Residues 1–58 (MEADPKVPFTDEMNIQDEHNWESGSWSSSRRSNDSNVTLLSRRSSVEQHEDERQKDSD) form a disordered region. Residues 23–36 (SGSWSSSRRSNDSN) are compositionally biased toward low complexity. N33 and N36 each carry an N-linked (GlcNAc...) asparagine glycan. A compositionally biased stretch (basic and acidic residues) spans 44–58 (SSVEQHEDERQKDSD). A run of 6 helical transmembrane segments spans residues 105–125 (VWLLSTFWVLAGCSISTVYYF), 177–197 (ALVVIAYWGSSYTAYGLGPLS), 210–230 (PWAITFLVTTQLTGYGLVGLY), 268–288 (VFMAIASAAFVYQWLPSFVFP), 315–335 (GFGLMDFSLDWNYVAFLSPLF), and 345–365 (FVGAALAVWITYPVAYFSDAL). N-linked (GlcNAc...) asparagine glycosylation is found at N386 and N398. 4 helical membrane-spanning segments follow: residues 415–435 (AMHFFWGFASASAIVTYAVLF), 478–498 (AWYALLLAVCLCLGTIQLYAG), 505–525 (WGLQLVVAISALFTLPCGMLF), and 585–605 (WELLVAQVYGTLLGPFVNWAV). Residues 629 to 649 (QGLGLGQGGGGGGGGGGGGGQ) are compositionally biased toward gly residues. The tract at residues 629–657 (QGLGLGQGGGGGGGGGGGGGQQQRAAGAH) is disordered. 3 consecutive transmembrane segments (helical) span residues 668–688 (NFFSSSVIWGVMGPARVFGGG), 700–720 (WLLPSGFAVGAAAVLLLWLIH), and 731–751 (WPLHPAIIFHGASLFPVFPTT). N752 carries an N-linked (GlcNAc...) asparagine glycan. A helical transmembrane segment spans residues 784–804 (AGLDCGAQLVQMVLGLAFLVF).

The protein belongs to the oligopeptide OPT transporter family.

The protein localises to the membrane. Functionally, oligopeptide transporter; part of the gene cluster that mediates the biosynthesis of the phomopsins, a group of hexapeptide mycotoxins which infects lupins and causes lupinosis disease in livestock. This Diaporthe leptostromiformis (Lupinosis disease fungus) protein is Oligopeptide transporter phomP2'.